The primary structure comprises 52 residues: Rubredoxin (52 aa).

Residues 1 to 51 (MDKYECSICGYIYDEAEGDDGNVAAGTKFADLPADWVCPTCGADKDAFVKM) form the Rubredoxin-like domain. Fe cation-binding residues include C6, C9, C38, and C41.

Belongs to the rubredoxin family. Fe(3+) is required as a cofactor.

Its function is as follows. Rubredoxin is a small nonheme, iron protein lacking acid-labile sulfide. Its single Fe, chelated to 4 Cys, functions as an electron acceptor and may also stabilize the conformation of the molecule. In Megasphaera elsdenii, this protein is Rubredoxin.